The following is a 142-amino-acid chain: Transcriptional regulator MraZ (142 aa).

2 SpoVT-AbrB domains span residues 5–47 (EYQH…TINE) and 76–119 (ACIV…SREK).

It belongs to the MraZ family. In terms of assembly, forms oligomers.

The protein localises to the cytoplasm. It is found in the nucleoid. The chain is Transcriptional regulator MraZ from Clostridium botulinum (strain Alaska E43 / Type E3).